We begin with the raw amino-acid sequence, 248 residues long: tRNA1(Val) (adenine(37)-N6)-methyltransferase (248 aa).

This sequence belongs to the methyltransferase superfamily. tRNA (adenine-N(6)-)-methyltransferase family.

Its subcellular location is the cytoplasm. It catalyses the reaction adenosine(37) in tRNA1(Val) + S-adenosyl-L-methionine = N(6)-methyladenosine(37) in tRNA1(Val) + S-adenosyl-L-homocysteine + H(+). In terms of biological role, specifically methylates the adenine in position 37 of tRNA(1)(Val) (anticodon cmo5UAC). The chain is tRNA1(Val) (adenine(37)-N6)-methyltransferase from Yersinia pseudotuberculosis serotype O:1b (strain IP 31758).